Here is a 367-residue protein sequence, read N- to C-terminus: Molybdopterin synthase catalytic subunit (367 aa).

Substrate-binding positions include 101-102, Lys-117, and 124-126; these read HR and KKE. The tract at residues 325 to 350 is disordered; the sequence is RHFTKREPSSMEAAPPKKSRKKSYSA.

The protein belongs to the MoaE family. MOCS2B subfamily. Heterotetramer; composed of 2 small (Mocs2A) and 2 large (Mocs2B) subunits. Component of the Ada2a-containing (ATAC) complex composed of at least Ada2a, Atac1, Hcf, Ada3, Gcn5, Mocs2B, Charac-14, Atac3, Atac2, NC2beta and wds.

It localises to the cytoplasm. The protein resides in the nucleus. The enzyme catalyses 2 [molybdopterin-synthase sulfur-carrier protein]-C-terminal-Gly-aminoethanethioate + cyclic pyranopterin phosphate + H2O = molybdopterin + 2 [molybdopterin-synthase sulfur-carrier protein]-C-terminal Gly-Gly + 2 H(+). It participates in cofactor biosynthesis; molybdopterin biosynthesis. Catalytic subunit of the molybdopterin synthase complex, a complex that catalyzes the conversion of precursor Z into molybdopterin. Acts by mediating the incorporation of 2 sulfur atoms from thiocarboxylated Mocs2A into precursor Z to generate a dithiolene group. Involved during biosynthesis of the molybdenum cofactor. The polypeptide is Molybdopterin synthase catalytic subunit (Drosophila melanogaster (Fruit fly)).